A 348-amino-acid chain; its full sequence is Phenylalanine--tRNA ligase alpha subunit (348 aa).

E259 lines the Mg(2+) pocket.

The protein belongs to the class-II aminoacyl-tRNA synthetase family. Phe-tRNA synthetase alpha subunit type 1 subfamily. Tetramer of two alpha and two beta subunits. Mg(2+) is required as a cofactor.

It localises to the cytoplasm. It carries out the reaction tRNA(Phe) + L-phenylalanine + ATP = L-phenylalanyl-tRNA(Phe) + AMP + diphosphate + H(+). This chain is Phenylalanine--tRNA ligase alpha subunit, found in Latilactobacillus sakei subsp. sakei (strain 23K) (Lactobacillus sakei subsp. sakei).